Reading from the N-terminus, the 144-residue chain is UPF0306 protein ESA_03544 (144 aa).

This sequence belongs to the UPF0306 family.

The protein is UPF0306 protein ESA_03544 of Cronobacter sakazakii (strain ATCC BAA-894) (Enterobacter sakazakii).